Consider the following 227-residue polypeptide: Cytochrome c oxidase subunit 2 (227 aa).

Residues 1–14 (MAHPLQLGLQDASS) lie on the Mitochondrial intermembrane side of the membrane. The chain crosses the membrane as a helical span at residues 15 to 45 (PIMEELLYFHDHALMIVFLISSLVLYTISLM). The Mitochondrial matrix segment spans residues 46–59 (LTTKLMHTSTMNAQ). The chain crosses the membrane as a helical span at residues 60 to 87 (MVETMWTILPAVILTSIALPSLRILYMT). Residues 88 to 227 (DEINNPLLTI…HFETWSTLTS (140 aa)) are Mitochondrial intermembrane-facing. Cu cation-binding residues include histidine 161, cysteine 196, glutamate 198, cysteine 200, histidine 204, and methionine 207. Glutamate 198 serves as a coordination point for Mg(2+).

Belongs to the cytochrome c oxidase subunit 2 family. Component of the cytochrome c oxidase (complex IV, CIV), a multisubunit enzyme composed of 14 subunits. The complex is composed of a catalytic core of 3 subunits MT-CO1, MT-CO2 and MT-CO3, encoded in the mitochondrial DNA, and 11 supernumerary subunits COX4I, COX5A, COX5B, COX6A, COX6B, COX6C, COX7A, COX7B, COX7C, COX8 and NDUFA4, which are encoded in the nuclear genome. The complex exists as a monomer or a dimer and forms supercomplexes (SCs) in the inner mitochondrial membrane with NADH-ubiquinone oxidoreductase (complex I, CI) and ubiquinol-cytochrome c oxidoreductase (cytochrome b-c1 complex, complex III, CIII), resulting in different assemblies (supercomplex SCI(1)III(2)IV(1) and megacomplex MCI(2)III(2)IV(2)). Found in a complex with TMEM177, COA6, COX18, COX20, SCO1 and SCO2. Interacts with TMEM177 in a COX20-dependent manner. Interacts with COX20. Interacts with COX16. Cu cation serves as cofactor.

Its subcellular location is the mitochondrion inner membrane. It catalyses the reaction 4 Fe(II)-[cytochrome c] + O2 + 8 H(+)(in) = 4 Fe(III)-[cytochrome c] + 2 H2O + 4 H(+)(out). In terms of biological role, component of the cytochrome c oxidase, the last enzyme in the mitochondrial electron transport chain which drives oxidative phosphorylation. The respiratory chain contains 3 multisubunit complexes succinate dehydrogenase (complex II, CII), ubiquinol-cytochrome c oxidoreductase (cytochrome b-c1 complex, complex III, CIII) and cytochrome c oxidase (complex IV, CIV), that cooperate to transfer electrons derived from NADH and succinate to molecular oxygen, creating an electrochemical gradient over the inner membrane that drives transmembrane transport and the ATP synthase. Cytochrome c oxidase is the component of the respiratory chain that catalyzes the reduction of oxygen to water. Electrons originating from reduced cytochrome c in the intermembrane space (IMS) are transferred via the dinuclear copper A center (CU(A)) of subunit 2 and heme A of subunit 1 to the active site in subunit 1, a binuclear center (BNC) formed by heme A3 and copper B (CU(B)). The BNC reduces molecular oxygen to 2 water molecules using 4 electrons from cytochrome c in the IMS and 4 protons from the mitochondrial matrix. This is Cytochrome c oxidase subunit 2 (MT-CO2) from Galeopterus variegatus (Malayan flying lemur).